Here is a 188-residue protein sequence, read N- to C-terminus: Elongation factor P (188 aa).

This sequence belongs to the elongation factor P family.

It is found in the cytoplasm. It participates in protein biosynthesis; polypeptide chain elongation. Functionally, involved in peptide bond synthesis. Stimulates efficient translation and peptide-bond synthesis on native or reconstituted 70S ribosomes in vitro. Probably functions indirectly by altering the affinity of the ribosome for aminoacyl-tRNA, thus increasing their reactivity as acceptors for peptidyl transferase. The sequence is that of Elongation factor P from Methylorubrum populi (strain ATCC BAA-705 / NCIMB 13946 / BJ001) (Methylobacterium populi).